The chain runs to 169 residues: Ribosome maturation factor RimM (169 aa).

One can recognise a PRC barrel domain in the interval 97-169 (NDEAYFTDLI…KIVVDWEYDY (73 aa)).

The protein belongs to the RimM family. In terms of assembly, binds ribosomal protein uS19.

It localises to the cytoplasm. An accessory protein needed during the final step in the assembly of 30S ribosomal subunit, possibly for assembly of the head region. Essential for efficient processing of 16S rRNA. May be needed both before and after RbfA during the maturation of 16S rRNA. It has affinity for free ribosomal 30S subunits but not for 70S ribosomes. The protein is Ribosome maturation factor RimM of Francisella philomiragia subsp. philomiragia (strain ATCC 25017 / CCUG 19701 / FSC 153 / O#319-036).